A 233-amino-acid polypeptide reads, in one-letter code: Phosphoribosylformylglycinamidine synthase subunit PurQ (233 aa).

The Glutamine amidotransferase type-1 domain occupies 3 to 233 (AAILVFPGIN…GLAQHLEKAA (231 aa)). Catalysis depends on Cys-87, which acts as the Nucleophile. Catalysis depends on residues His-204 and Glu-206.

As to quaternary structure, part of the FGAM synthase complex composed of 1 PurL, 1 PurQ and 2 PurS subunits.

It is found in the cytoplasm. The catalysed reaction is N(2)-formyl-N(1)-(5-phospho-beta-D-ribosyl)glycinamide + L-glutamine + ATP + H2O = 2-formamido-N(1)-(5-O-phospho-beta-D-ribosyl)acetamidine + L-glutamate + ADP + phosphate + H(+). The enzyme catalyses L-glutamine + H2O = L-glutamate + NH4(+). Its pathway is purine metabolism; IMP biosynthesis via de novo pathway; 5-amino-1-(5-phospho-D-ribosyl)imidazole from N(2)-formyl-N(1)-(5-phospho-D-ribosyl)glycinamide: step 1/2. Its function is as follows. Part of the phosphoribosylformylglycinamidine synthase complex involved in the purines biosynthetic pathway. Catalyzes the ATP-dependent conversion of formylglycinamide ribonucleotide (FGAR) and glutamine to yield formylglycinamidine ribonucleotide (FGAM) and glutamate. The FGAM synthase complex is composed of three subunits. PurQ produces an ammonia molecule by converting glutamine to glutamate. PurL transfers the ammonia molecule to FGAR to form FGAM in an ATP-dependent manner. PurS interacts with PurQ and PurL and is thought to assist in the transfer of the ammonia molecule from PurQ to PurL. The polypeptide is Phosphoribosylformylglycinamidine synthase subunit PurQ (Bradyrhizobium diazoefficiens (strain JCM 10833 / BCRC 13528 / IAM 13628 / NBRC 14792 / USDA 110)).